Reading from the N-terminus, the 96-residue chain is Protein YddL (96 aa).

The first 21 residues, 1–21 (MKLKIVAVVVTGLLAANVAHA), serve as a signal peptide directing secretion.

The protein is Protein YddL (yddL) of Escherichia coli (strain K12).